Consider the following 136-residue polypeptide: Aspartate 1-decarboxylase (136 aa).

Ser-25 acts as the Schiff-base intermediate with substrate; via pyruvic acid in catalysis. The residue at position 25 (Ser-25) is a Pyruvic acid (Ser). Residue Thr-57 participates in substrate binding. Tyr-58 acts as the Proton donor in catalysis. 73 to 75 (GAA) is a substrate binding site.

The protein belongs to the PanD family. In terms of assembly, heterooctamer of four alpha and four beta subunits. It depends on pyruvate as a cofactor. In terms of processing, is synthesized initially as an inactive proenzyme, which is activated by self-cleavage at a specific serine bond to produce a beta-subunit with a hydroxyl group at its C-terminus and an alpha-subunit with a pyruvoyl group at its N-terminus.

The protein resides in the cytoplasm. The enzyme catalyses L-aspartate + H(+) = beta-alanine + CO2. Its pathway is cofactor biosynthesis; (R)-pantothenate biosynthesis; beta-alanine from L-aspartate: step 1/1. In terms of biological role, catalyzes the pyruvoyl-dependent decarboxylation of aspartate to produce beta-alanine. In Corynebacterium efficiens (strain DSM 44549 / YS-314 / AJ 12310 / JCM 11189 / NBRC 100395), this protein is Aspartate 1-decarboxylase.